The primary structure comprises 128 residues: uncharacterized protein (128 aa).

Residues 5-128 (SIHHIAIICS…DQLPLELYEQ (124 aa)) enclose the VOC domain. The a divalent metal cation site is built by H8, E56, H77, and E124.

This is an uncharacterized protein from Bacillus subtilis (strain 168).